The primary structure comprises 326 residues: MRSISCSKEYAEDVRNLNIRPEQLDDFFGQKDLIQNLKVFINAAKTRTEALDHVLLHGPPGLGKTTLAQIISKELRVSFRATSGPLLNKAGDLAAVLTTLNAKDVLFIDEIHRLNRSIEEVLYTAMEDFCLDLLVGEGPSTRTLRIDLPPFTLVGATTRLGLLSAPLRDRFGIPLRLEFYSFEELVDIIKRGTKVFSAEIEEDAIQEIACRARGTPRIALRLLRRIRDFVEVKDNKKITHKIADSALSKLGIDKMGLNKLDVDYLRFLFNTSGSVGIDTISIALSEDSGNIEETVEPYLVKISFVKRTPRGRVLTDQGKEYLSLQY.

The interval 1–180 is large ATPase domain (RuvB-L); that stretch reads MRSISCSKEY…FGIPLRLEFY (180 aa). ATP contacts are provided by residues I19, R20, G61, K64, T65, T66, 127–129, R170, Y180, and R217; that span reads EDF. Mg(2+) is bound at residue T65. The small ATPAse domain (RuvB-S) stretch occupies residues 181–251; it reads SFEELVDIIK…IADSALSKLG (71 aa). Positions 254–326 are head domain (RuvB-H); sequence KMGLNKLDVD…QGKEYLSLQY (73 aa). DNA contacts are provided by R307 and R312.

It belongs to the RuvB family. In terms of assembly, homohexamer. Forms an RuvA(8)-RuvB(12)-Holliday junction (HJ) complex. HJ DNA is sandwiched between 2 RuvA tetramers; dsDNA enters through RuvA and exits via RuvB. An RuvB hexamer assembles on each DNA strand where it exits the tetramer. Each RuvB hexamer is contacted by two RuvA subunits (via domain III) on 2 adjacent RuvB subunits; this complex drives branch migration. In the full resolvosome a probable DNA-RuvA(4)-RuvB(12)-RuvC(2) complex forms which resolves the HJ.

It localises to the cytoplasm. The enzyme catalyses ATP + H2O = ADP + phosphate + H(+). Its function is as follows. The RuvA-RuvB-RuvC complex processes Holliday junction (HJ) DNA during genetic recombination and DNA repair, while the RuvA-RuvB complex plays an important role in the rescue of blocked DNA replication forks via replication fork reversal (RFR). RuvA specifically binds to HJ cruciform DNA, conferring on it an open structure. The RuvB hexamer acts as an ATP-dependent pump, pulling dsDNA into and through the RuvAB complex. RuvB forms 2 homohexamers on either side of HJ DNA bound by 1 or 2 RuvA tetramers; 4 subunits per hexamer contact DNA at a time. Coordinated motions by a converter formed by DNA-disengaged RuvB subunits stimulates ATP hydrolysis and nucleotide exchange. Immobilization of the converter enables RuvB to convert the ATP-contained energy into a lever motion, pulling 2 nucleotides of DNA out of the RuvA tetramer per ATP hydrolyzed, thus driving DNA branch migration. The RuvB motors rotate together with the DNA substrate, which together with the progressing nucleotide cycle form the mechanistic basis for DNA recombination by continuous HJ branch migration. Branch migration allows RuvC to scan DNA until it finds its consensus sequence, where it cleaves and resolves cruciform DNA. The protein is Holliday junction branch migration complex subunit RuvB of Wolbachia sp. subsp. Brugia malayi (strain TRS).